Consider the following 316-residue polypeptide: Ribosomal RNA small subunit methyltransferase H (316 aa).

S-adenosyl-L-methionine is bound by residues 35–37, Asp55, Phe84, Asp105, and Gln112; that span reads SGH.

It belongs to the methyltransferase superfamily. RsmH family.

The protein localises to the cytoplasm. It carries out the reaction cytidine(1402) in 16S rRNA + S-adenosyl-L-methionine = N(4)-methylcytidine(1402) in 16S rRNA + S-adenosyl-L-homocysteine + H(+). Its function is as follows. Specifically methylates the N4 position of cytidine in position 1402 (C1402) of 16S rRNA. The protein is Ribosomal RNA small subunit methyltransferase H of Streptococcus pyogenes serotype M6 (strain ATCC BAA-946 / MGAS10394).